We begin with the raw amino-acid sequence, 1103 residues long: MAAGCLLALTLTLFQSLLIGPSSEEPFPSAVTIKSWVDKMQEDLVTLAKTASGVNQLVDIYEKYQDLYTVEPNNARQLVEIAARDIEKLLSNRSKALVRLALEAEKVQAAHQWREDFASNEVVYYNAKDDLDPEKNDSEPGSQRIKPVFIEDANFGRQISYQHAAVHIPTDIYEGSTIVLNELNWTSALDEVFKKNREEDPSLLWQVFGSATGLARYYPASPWVDNSRTPNKIDLYDVRRRPWYIQGAASPKDMLILVDVSGSVSGLTLKLIRTSVSEMLETLSDDDFVNVASFNSNAQDVSCFQHLVQANVRNKKVLKDAVNNITAKGITDYKKGFSFAFEQLLNYNVSRANCNKIIMLFTDGGEERAQEIFNKYNKDKKVRVFTFSVGQHNYDRGPIQWMACENKGYYYEIPSIGAIRINTQEYLDVLGRPMVLAGDKAKQVQWTNVYLDALELGLVITGTLPVFNITGQFENKTNLKNQLILGVMGVDVSLEDIKRLTPRFTLCPNGYYFAIDPNGYVLLHPNLQPKPIGVGIPTINLRKRRPNIQNPKSQEPVTLDFLDAELENDIKVEIRNKMIDGESGEKTFRTLVKSQDERYIDKGNRTYTWTPVNGTDYSLALVLPTYSFYYIKAKLEETITQARYSETLKPDNFEESGYTFIAPRDYCNDLKISDNNTEFLLNFNEFIDRKTPNNPSCNADLINRVLLDAGFTNELVQNYWSKQKNIKGVKARFVVTDGGITRVYPKEAGENWQENPETYEDSFYKRSLDNDNYVFTAPYFNKSGPGAYESGIMVSKAVEIYIQGKLLKPAVVGIKIDVNSWIENFTKTSIRDPCAGPVCDCKRNSDVMDCVILDDGGFLLMANHDDYTNQIGRFFGEIDPSLMRHLVNISVYAFNKSYDYQSVCEPGAAPKQGAGHRSAYVPSVADILQIGWWATAAAWSILQQFLLSLTFPRLLEAVEMEDDDFTASLSKQSCITEQTQYFFDNDSKSFSGVLDCGNCSRIFHGEKLMNTNLIFIMVESKGTCPCDTRLLIQAEQTSDGPNPCDMVKQPRYRKGPDVCFDNNVLEDYTDCGGVSGLNPSLWYIIGIQFLLLWLVSGSTHRLL.

A signal peptide spans 1–24 (MAAGCLLALTLTLFQSLLIGPSSE). At 25–1073 (EPFPSAVTIK…VLEDYTDCGG (1049 aa)) the chain is on the extracellular side. Asn-92 carries N-linked (GlcNAc...) asparagine glycosylation. Ser-119 bears the Phosphoserine mark. Residues Asn-136 and Asn-184 are each glycosylated (N-linked (GlcNAc...) asparagine). The 178-residue stretch at 253 to 430 (DMLILVDVSG…INTQEYLDVL (178 aa)) folds into the VWFA domain. A divalent metal cation contacts are provided by Asp-259, Ser-261, and Ser-263. Residues 259–263 (DVSGS) carry the MIDAS-like motif motif. N-linked (GlcNAc...) asparagine glycosylation is found at Asn-324, Asn-348, Asn-468, Asn-475, Asn-604, Asn-613, Asn-675, Asn-781, Asn-824, Asn-888, Asn-895, Asn-985, and Asn-998. Cysteines 404 and 1059 form a disulfide. The Cache domain occupies 446-556 (WTNVYLDALE…NIQNPKSQEP (111 aa)). A helical membrane pass occupies residues 1074 to 1094 (VSGLNPSLWYIIGIQFLLLWL). Over 1095–1103 (VSGSTHRLL) the chain is Cytoplasmic.

It belongs to the calcium channel subunit alpha-2/delta family. In terms of assembly, dimer formed of alpha-2-1 and delta-1 chains; disulfide-linked. Voltage-dependent calcium channels are multisubunit complexes, consisting of alpha-1 (CACNA1), alpha-2 (CACNA2D), beta (CACNB) and delta (CACNA2D) subunits in a 1:1:1:1 ratio. In terms of processing, proteolytically processed into subunits alpha-2-1 and delta-1 that are disulfide-linked. In terms of tissue distribution, isoform 1 is expressed in skeletal muscle. Isoform 2 is expressed in the central nervous system. Isoform 2, isoform 4 and isoform 5 are expressed in neuroblastoma cells. Isoform 3, isoform 4 and isoform 5 are expressed in the aorta.

Its subcellular location is the membrane. It localises to the cell membrane. In terms of biological role, the alpha-2/delta subunit of voltage-dependent calcium channels regulates calcium current density and activation/inactivation kinetics of the calcium channel. Plays an important role in excitation-contraction coupling. The polypeptide is Voltage-dependent calcium channel subunit alpha-2/delta-1 (CACNA2D1) (Homo sapiens (Human)).